The primary structure comprises 772 residues: Acylamino-acid-releasing enzyme 2 (772 aa).

Active-site charge relay system residues include serine 617, aspartate 708, and histidine 740.

It belongs to the peptidase S9C family. In terms of assembly, homotetramer.

The protein resides in the cytoplasm. It carries out the reaction Cleavage of an N-acetyl or N-formyl amino acid from the N-terminus of a polypeptide.. Functionally, catalyzes the hydrolysis of the N-terminal peptide bond of an N-acetylated peptide to generate an N-acetylated amino acid and a peptide with a free N-terminus. The chain is Acylamino-acid-releasing enzyme 2 from Oryza sativa subsp. japonica (Rice).